Consider the following 249-residue polypeptide: 2,3-bisphosphoglycerate-dependent phosphoglycerate mutase (249 aa).

Substrate-binding positions include 9-16 (RHGQSQWN), 22-23 (TG), Arg61, 88-91 (ERHY), Lys99, 115-116 (RR), and 184-185 (GN). The Tele-phosphohistidine intermediate role is filled by His10. Glu88 functions as the Proton donor/acceptor in the catalytic mechanism.

The protein belongs to the phosphoglycerate mutase family. BPG-dependent PGAM subfamily. Homodimer.

The enzyme catalyses (2R)-2-phosphoglycerate = (2R)-3-phosphoglycerate. The protein operates within carbohydrate degradation; glycolysis; pyruvate from D-glyceraldehyde 3-phosphate: step 3/5. Catalyzes the interconversion of 2-phosphoglycerate and 3-phosphoglycerate. This is 2,3-bisphosphoglycerate-dependent phosphoglycerate mutase from Xanthomonas oryzae pv. oryzae (strain PXO99A).